The following is a 477-amino-acid chain: Aspartyl/glutamyl-tRNA(Asn/Gln) amidotransferase subunit B (477 aa).

It belongs to the GatB/GatE family. GatB subfamily. Heterotrimer of A, B and C subunits.

It catalyses the reaction L-glutamyl-tRNA(Gln) + L-glutamine + ATP + H2O = L-glutaminyl-tRNA(Gln) + L-glutamate + ADP + phosphate + H(+). It carries out the reaction L-aspartyl-tRNA(Asn) + L-glutamine + ATP + H2O = L-asparaginyl-tRNA(Asn) + L-glutamate + ADP + phosphate + 2 H(+). Its function is as follows. Allows the formation of correctly charged Asn-tRNA(Asn) or Gln-tRNA(Gln) through the transamidation of misacylated Asp-tRNA(Asn) or Glu-tRNA(Gln) in organisms which lack either or both of asparaginyl-tRNA or glutaminyl-tRNA synthetases. The reaction takes place in the presence of glutamine and ATP through an activated phospho-Asp-tRNA(Asn) or phospho-Glu-tRNA(Gln). The sequence is that of Aspartyl/glutamyl-tRNA(Asn/Gln) amidotransferase subunit B from Ureaplasma urealyticum serovar 10 (strain ATCC 33699 / Western).